The sequence spans 195 residues: MSKQEKSNVEDKSLDIETAAQVETAQESASGALEELSVEEQLERAKDTIKELEDSCDQFKDEALRAKAEMENIRKRAERDVSNARKFGIEKFAKELLPVIDSIEQALKHEVKLEEAIAMKEGIELTAKILVDILKKNGVEELDPKGEKFDPNLHEAMAMIPNPEFEDNTIFDVFQKGYMLNGRIVRAAKVVIVKN.

The protein belongs to the GrpE family. In terms of assembly, homodimer.

The protein resides in the cytoplasm. Participates actively in the response to hyperosmotic and heat shock by preventing the aggregation of stress-denatured proteins, in association with DnaK and GrpE. It is the nucleotide exchange factor for DnaK and may function as a thermosensor. Unfolded proteins bind initially to DnaJ; upon interaction with the DnaJ-bound protein, DnaK hydrolyzes its bound ATP, resulting in the formation of a stable complex. GrpE releases ADP from DnaK; ATP binding to DnaK triggers the release of the substrate protein, thus completing the reaction cycle. Several rounds of ATP-dependent interactions between DnaJ, DnaK and GrpE are required for fully efficient folding. This Francisella tularensis subsp. holarctica (strain OSU18) protein is Protein GrpE.